Consider the following 297-residue polypeptide: Bifunctional protein FolD 2 (297 aa).

NADP(+)-binding positions include 177–179, Ile202, and Ile243; that span reads GKS.

This sequence belongs to the tetrahydrofolate dehydrogenase/cyclohydrolase family. In terms of assembly, homodimer.

The catalysed reaction is (6R)-5,10-methylene-5,6,7,8-tetrahydrofolate + NADP(+) = (6R)-5,10-methenyltetrahydrofolate + NADPH. It catalyses the reaction (6R)-5,10-methenyltetrahydrofolate + H2O = (6R)-10-formyltetrahydrofolate + H(+). It participates in one-carbon metabolism; tetrahydrofolate interconversion. In terms of biological role, catalyzes the oxidation of 5,10-methylenetetrahydrofolate to 5,10-methenyltetrahydrofolate and then the hydrolysis of 5,10-methenyltetrahydrofolate to 10-formyltetrahydrofolate. The sequence is that of Bifunctional protein FolD 2 from Rhizorhabdus wittichii (strain DSM 6014 / CCUG 31198 / JCM 15750 / NBRC 105917 / EY 4224 / RW1) (Sphingomonas wittichii).